A 322-amino-acid polypeptide reads, in one-letter code: uncharacterized protein (322 aa).

Helical transmembrane passes span 5–25 (LISI…IPGI), 37–57 (IGPS…FKET), 71–91 (LPLL…LTSF), 109–129 (MMYV…MPFI), 153–173 (SFKM…LPFV), 189–209 (LFSL…VIMI), 245–265 (LLLI…APDI), 268–288 (PITI…ATFV), and 300–320 (IYPI…FALL).

It localises to the cell membrane. This is an uncharacterized protein from Methanocaldococcus jannaschii (strain ATCC 43067 / DSM 2661 / JAL-1 / JCM 10045 / NBRC 100440) (Methanococcus jannaschii).